The following is a 37-amino-acid chain: Beta-2-microglobulin (37 aa).

The region spanning 11-37 is the Ig-like C1-type domain; the sequence is GKEDVLICHVSNFHPPDITITLLKNGE.

The protein belongs to the beta-2-microglobulin family. Heterodimer of an alpha chain and a beta chain. Beta-2-microglobulin is the beta-chain of major histocompatibility complex class I molecules.

The protein resides in the secreted. Functionally, component of the class I major histocompatibility complex (MHC). Involved in the presentation of peptide antigens to the immune system. The sequence is that of Beta-2-microglobulin (b2m) from Oreochromis niloticus (Nile tilapia).